The sequence spans 671 residues: Annexin A6 (671 aa).

Annexin repeat units follow at residues 18 to 89, 90 to 161, 173 to 245, 249 to 320, 361 to 432, 433 to 504, 519 to 594, and 598 to 669; these read FNAS…SLMR, PPAY…VLLQ, DLVE…AVVK, STAE…KLCE, FNDD…GLML, TPAQ…SLAL, EDAK…AIVR, and NKPA…LCGG.

This sequence belongs to the annexin family.

It is found in the cytoplasm. The protein resides in the melanosome. In terms of biological role, may associate with CD21. May regulate the release of Ca(2+) from intracellular stores. In Gallus gallus (Chicken), this protein is Annexin A6 (ANXA6).